The chain runs to 118 residues: MRNKYIEAFENAQIAGKNIPDFRAGDTLRVATRIHEGDKTRIQNFEGICIARRGSGTGETFIIRKIGANSVGVERIFPIFSDSIEEIKVLRKGRVRRAKLFYLRELRGKAAKIRELRK.

It belongs to the bacterial ribosomal protein bL19 family.

Functionally, this protein is located at the 30S-50S ribosomal subunit interface and may play a role in the structure and function of the aminoacyl-tRNA binding site. The sequence is that of Large ribosomal subunit protein bL19 from Campylobacter concisus (strain 13826).